The sequence spans 628 residues: UvrABC system protein C (628 aa).

Positions 20–99 constitute a GIY-YIG domain; the sequence is TSAGVYLMRD…IKTHKPRYNV (80 aa). The region spanning 209–244 is the UVR domain; that stretch reads AELLAQLEDQMQTAAAAMNFEHAARLRDRITGLNQL.

It belongs to the UvrC family. As to quaternary structure, interacts with UvrB in an incision complex.

The protein resides in the cytoplasm. Functionally, the UvrABC repair system catalyzes the recognition and processing of DNA lesions. UvrC both incises the 5' and 3' sides of the lesion. The N-terminal half is responsible for the 3' incision and the C-terminal half is responsible for the 5' incision. The chain is UvrABC system protein C from Gloeobacter violaceus (strain ATCC 29082 / PCC 7421).